The sequence spans 341 residues: UDP-N-acetylenolpyruvoylglucosamine reductase (341 aa).

The region spanning 15-185 (VTQSCLSLIE…TAVGLRLPKT (171 aa)) is the FAD-binding PCMH-type domain. Residue R161 is part of the active site. The active-site Proton donor is the S231. Residue E327 is part of the active site.

Belongs to the MurB family. FAD is required as a cofactor.

The protein resides in the cytoplasm. It catalyses the reaction UDP-N-acetyl-alpha-D-muramate + NADP(+) = UDP-N-acetyl-3-O-(1-carboxyvinyl)-alpha-D-glucosamine + NADPH + H(+). The protein operates within cell wall biogenesis; peptidoglycan biosynthesis. Its function is as follows. Cell wall formation. This is UDP-N-acetylenolpyruvoylglucosamine reductase from Shewanella oneidensis (strain ATCC 700550 / JCM 31522 / CIP 106686 / LMG 19005 / NCIMB 14063 / MR-1).